A 224-amino-acid chain; its full sequence is (S)-2-haloacid dehalogenase H-109 (224 aa).

Residue D10 is the Nucleophile of the active site. An (S)-2-haloacid is bound by residues 11 to 12 (LY), R41, and 118 to 119 (SN). The important for catalytic activity stretch occupies residues 175-180 (SSNSWD).

It belongs to the HAD-like hydrolase superfamily. S-2-haloalkanoic acid dehalogenase family.

The catalysed reaction is an (S)-2-haloacid + H2O = a (2R)-2-hydroxycarboxylate + a halide anion + H(+). The enzyme catalyses (S)-2-chloropropanoate + H2O = (R)-lactate + chloride + H(+). In terms of biological role, catalyzes the hydrolytic dehalogenation of small (S)-2-haloalkanoic acids to yield the corresponding (R)-2-hydroxyalkanoic acids. Acts on acids of short chain lengths, C(2) to C(4), with inversion of configuration at C-2. Active with 2-halogenated carboxylic acids and converts only the S-isomer (or L-isomer) of 2-chloropropionic acid with inversion of configuration to produce R-lactate (or D-isomer). This is (S)-2-haloacid dehalogenase H-109 from Pseudomonas putida (Arthrobacter siderocapsulatus).